The sequence spans 342 residues: Trans-3-hydroxy-L-proline dehydratase (342 aa).

Serine 90 acts as the Proton acceptor in catalysis. Substrate contacts are provided by residues 91 to 92, aspartate 252, and 257 to 258; these read GS and GT.

It belongs to the proline racemase family.

The catalysed reaction is trans-3-hydroxy-L-proline = 1-pyrroline-2-carboxylate + H2O. Its function is as follows. Catalyzes the dehydration of trans-3-hydroxy-L-proline (t3LHyp) to Delta(1)-pyrroline-2-carboxylate (Pyr2C). Is likely involved in a degradation pathway that converts t3LHyp to L-proline. Displays neither proline racemase activity nor 4-hydroxyproline 2-epimerase activity. In Allorhizobium ampelinum (strain ATCC BAA-846 / DSM 112012 / S4) (Agrobacterium vitis (strain S4)), this protein is Trans-3-hydroxy-L-proline dehydratase.